Consider the following 398-residue polypeptide: Inner membrane protein YjgN (398 aa).

Topologically, residues 1 to 24 (MAQVINEMDVPSHSFVFHGTGERY) are cytoplasmic. The chain crosses the membrane as a helical span at residues 25–45 (FLICVVNVLLTIITLGIYLPW). The Periplasmic segment spans residues 46–73 (ALMKCKRYLYANMEVNGQRFSYGITGGN). Residues 74–94 (VFFSCLVFVFFYFAILMTVSA) form a helical membrane-spanning segment. Aspartate 95 is a topological domain (cytoplasmic). A helical membrane pass occupies residues 96–116 (MPLIGCVLTLSLLVLLIFMAA). The Periplasmic segment spans residues 117-142 (KGLRYQALMTSLNGVRFSFNCSMKGV). Residues 143–163 (WWVTFFLPILMAIGMGTVFFI) traverse the membrane as a helical segment. Residues 164–175 (STKMLHANSSSS) are Cytoplasmic-facing. The chain crosses the membrane as a helical span at residues 176–196 (VIVSVVLMAIVGIVSIGIFNG). Residues 197–228 (TLYSLVMSFLWSNTSFGIHRFKVKLDTAYCIK) lie on the Periplasmic side of the membrane. A helical transmembrane segment spans residues 229–249 (YAILAFLALLPFLAVAGYIIF). The Cytoplasmic portion of the chain corresponds to 250–278 (DQILNAYDSSVYANDDIENLQQFMEMQRK). A helical membrane pass occupies residues 279–299 (MIIAQLIYYFGIAVSTSYLTV). Residues 300 to 333 (SLRNHFMSNLSLNDGRIRFRSTLTYHGMLYRMCA) are Periplasmic-facing. A helical membrane pass occupies residues 334-354 (LVVISGITGGLAYPLLKIWMI). At 355–398 (DWQAKNTYLLGDLDDLPLINKEEQPDKGFLASISRGIMPSLPFL) the chain is on the cytoplasmic side.

It is found in the cell inner membrane. This Escherichia coli O157:H7 protein is Inner membrane protein YjgN (yjgN).